The sequence spans 521 residues: Medium/long-chain-fatty-acid--[acyl-carrier-protein] ligase MbtM (521 aa).

Belongs to the ATP-dependent AMP-binding enzyme family.

The catalysed reaction is a long-chain fatty acid + holo-[ACP] + ATP = a long-chain fatty acyl-[ACP] + AMP + diphosphate. It carries out the reaction a medium-chain fatty acid + holo-[ACP] + ATP = a medium-chain fatty acyl-[ACP] + AMP + diphosphate. It participates in siderophore biosynthesis; mycobactin biosynthesis. Its function is as follows. Activates lipidic moieties required for mycobactin biosynthesis. Converts medium- to long-chain aliphatic fatty acids into acyl adenylate, which is further transferred on to the phosphopantetheine arm of the carrier protein MbtL. The polypeptide is Medium/long-chain-fatty-acid--[acyl-carrier-protein] ligase MbtM (mbtM) (Mycobacterium sp. (strain MCS)).